Reading from the N-terminus, the 160-residue chain is AP-1 complex subunit sigma-2 (160 aa).

It belongs to the adaptor complexes small subunit family. In terms of assembly, adaptor protein complex 1 (AP-1) is a heterotetramer composed of two large adaptins (gamma-type subunit AP1G1 and beta-type subunit AP1B1), a medium adaptin (mu-type subunit AP1M1 or AP1M2) and a small adaptin (sigma-type subunit AP1S1 or AP1S2 or AP1S3). Binds to MUC1. Widely expressed.

It localises to the golgi apparatus. The protein resides in the cytoplasmic vesicle membrane. The protein localises to the membrane. Its subcellular location is the clathrin-coated pit. Subunit of clathrin-associated adaptor protein complex 1 that plays a role in protein sorting in the late-Golgi/trans-Golgi network (TGN) and/or endosomes. The AP complexes mediate both the recruitment of clathrin to membranes and the recognition of sorting signals within the cytosolic tails of transmembrane cargo molecules. This chain is AP-1 complex subunit sigma-2 (Ap1s2), found in Mus musculus (Mouse).